A 1639-amino-acid polypeptide reads, in one-letter code: RIMS-binding protein 3B (1639 aa).

Disordered regions lie at residues 1 to 22, 215 to 240, and 295 to 364; these read MAKD…SSPA, GSPD…CHAP, and SLDS…LTPS. The stretch at 21-143 forms a coiled coil; that stretch reads PAAAVLENQR…ELQRQLAEEL (123 aa). Residues 326–339 show a composition bias toward pro residues; that stretch reads SPPPSPLPPPPPPS. Coiled-coil stretches lie at residues 409–442 and 480–619; these read QADE…QETN and LAKD…AEEN. The disordered stretch occupies residues 697–811; the sequence is CRPGHPPEQP…DRDTASEVDD (115 aa). Polar residues-rich tracts occupy residues 707 to 718 and 761 to 775; these read WETSQMPESQVK and SVPQ…SQPL. The span at 776-790 shows a compositional bias: low complexity; the sequence is SKKTSSQSNSSSEGS. Residues 832–899 form the SH3 1 domain; the sequence is PKLKIFMAQY…PSNFVEQIPD (68 aa). 2 consecutive Fibronectin type-III domains span residues 995 to 1083 and 1088 to 1184; these read APMQ…TLLA and PPLE…IPED. 3 disordered regions span residues 1251–1273, 1292–1325, and 1392–1413; these read PRRQ…GAGS, QKSP…SPAP, and GTER…QALG. Polar residues predominate over residues 1293–1305; sequence KSPQNHRPPSVSD. Over residues 1392 to 1406 the composition is skewed to basic and acidic residues; sequence GTERREERREPEPHS. SH3 domains lie at 1452 to 1520 and 1569 to 1636; these read TPAR…EMEV and WTPK…HMSL.

This sequence belongs to the RIMBP family. Interacts with LRGUK (via guanylate kinase-like domain). Interacts (via C-terminus) with HOOK1 (via coiled-coil region).

Its subcellular location is the cytoplasm. The protein localises to the cytoskeleton. In terms of biological role, probable component of the manchette, a microtubule-based structure which plays a key role in sperm head morphogenesis during late stages of sperm development. The sequence is that of RIMS-binding protein 3B (RIMBP3B) from Homo sapiens (Human).